A 188-amino-acid chain; its full sequence is UPF0301 protein Mmwyl1_0539 (188 aa).

It belongs to the UPF0301 (AlgH) family.

This Marinomonas sp. (strain MWYL1) protein is UPF0301 protein Mmwyl1_0539.